The following is a 65-amino-acid chain: VESP-VB1 (65 aa).

The signal sequence occupies residues 1–23 (MKMSILFLFALIASLACLQLTFA). AXPX repeat units lie at residues 23–26 (AAPA), 27–30 (ASPL), 31–34 (ANPG), 35–38 (ASPE), 39–42 (AAPL), 43–46 (ADPL), and 47–50 (ADPF). The propeptide occupies 24 to 49 (APAASPLANPGASPEAAPLADPLADP). The residue at position 62 (Leu62) is a Leucine amide.

As to expression, expressed by the venom gland.

Its subcellular location is the secreted. In terms of biological role, antimicrobial peptide. Shows activity against both Gram-positive (S.aureus MIC=1.0-3.75 ug/ml) and -negative (E.coli MIC=7.5-15 ug/ml) bacteria, as well against fungi (C.albicans MIC=30 ug/ml). Also promotes important mast cell degranulation. Shows little hemolytic activity on rabbit and human erythrocytes. Its mast cell degranulation activity may be related to the activation of G-protein coupled receptors in mast cells as well as interaction with other proteins located in cell endosomal membranes in the mast cells. In Vespa bicolor (Black shield wasp), this protein is VESP-VB1.